Consider the following 768-residue polypeptide: DNA replication licensing factor MCM3 homolog 1 (768 aa).

The 208-residue stretch at 290–497 (TFDLLGNSLA…IDRQISEHVA (208 aa)) folds into the MCM domain. 340-347 (GDPSVAKS) lines the ATP pocket. An Arginine finger motif is present at residues 472–475 (SRFD). A disordered region spans residues 662 to 687 (MKQQAEHDAGATGGTVDGHGSSGNDP). The span at 672 to 682 (ATGGTVDGHGS) shows a compositional bias: gly residues.

It belongs to the MCM family.

It localises to the nucleus. It carries out the reaction ATP + H2O = ADP + phosphate + H(+). Functionally, acts as a factor that allows the DNA to undergo a single round of replication per cell cycle. Required for DNA replication and cell proliferation. May act as a component of the MCM complex which is the putative replicative helicase of the replication licensing system in eukaryotic cells. This is DNA replication licensing factor MCM3 homolog 1 (ROA1) from Zea mays (Maize).